An 86-amino-acid chain; its full sequence is U13-theraphotoxin-Cg1b (86 aa).

The N-terminal stretch at 1-21 (MKVSVLITLAVLGVMFVWASA) is a signal peptide. The propeptide occupies 22 to 51 (AELEQSGSDQKDSPAWLKSMERIFQSEERE). Disulfide bonds link Cys52-Cys66, Cys59-Cys71, and Cys65-Cys78.

It belongs to the neurotoxin 10 (Hwtx-1) family. 41 (Jztx-36) subfamily. Expressed by the venom gland.

It is found in the secreted. Probable ion channel inhibitor. This Chilobrachys guangxiensis (Chinese earth tiger tarantula) protein is U13-theraphotoxin-Cg1b.